The primary structure comprises 231 residues: Quercetin 2,3-dioxygenase (231 aa).

A divalent metal cation is bound by residues His57, His59, His101, and Glu103.

This sequence belongs to the pirin family. Requires Zn(2+) as cofactor. It depends on Co(2+) as a cofactor. Fe(2+) serves as cofactor.

The catalysed reaction is quercetin + O2 = 2-(3,4-dihydroxybenzoyloxy)-4,6-dihydroxybenzoate + CO. Its pathway is flavonoid metabolism; quercetin degradation. In terms of biological role, has quercetin 2,3-dioxygenase activity in vitro. Its physiological role is unknown; however, may provide a mechanism that would avoid inhibition of key cellular proteins, such as DNA gyrase, by quercetin. The chain is Quercetin 2,3-dioxygenase (yhhW) from Escherichia coli O157:H7.